Reading from the N-terminus, the 214-residue chain is Response regulator GacA (214 aa).

One can recognise a Response regulatory domain in the interval 3-119 (KVLVVDDHDL…EMVQAIRLVF (117 aa)). Position 54 is a 4-aspartylphosphate (Asp54). Residues 143 to 208 (NNSPFDLLSE…ELALLAVRHG (66 aa)) form the HTH luxR-type domain. Residues 167-186 (VQTISDKLCLSPKTVNTYRY) constitute a DNA-binding region (H-T-H motif).

Post-translationally, phosphorylated by LemA.

Functionally, forms part of a two-component regulatory system GacA/GacA(LemA). May be involved in lesion formation, swarming and in the production of extracellular protease, syringomycin and N-acyl-L-homoserine lactone (acyl-HSL). In Pseudomonas syringae pv. syringae (strain B728a), this protein is Response regulator GacA (gacA).